A 357-amino-acid polypeptide reads, in one-letter code: Protein XRP2 (357 aa).

A compositionally biased stretch (basic residues) spans 1–11; it reads MGCFFSKRRKP. The interval 1–39 is disordered; it reads MGCFFSKRRKPAQGGQQQGASQEPAAGEEKAPQYSWDQR. Glycine 2 carries N-myristoyl glycine lipidation. Cysteine 3 carries the S-palmitoyl cysteine lipid modification. Low complexity predominate over residues 12 to 25; the sequence is AQGGQQQGASQEPA. One can recognise a C-CAP/cofactor C-like domain in the interval 32–186; it reads PQYSWDQRAK…TWSNIHDFTP (155 aa). Residues 105–106 and 122–125 contribute to the GTP site; these read GS and QQFR.

It belongs to the TBCC family. Post-translationally, myristoylated on Gly-2; which may be required for membrane targeting. Palmitoylated on Cys-3; which may be required for plasma membrane targeting.

Its subcellular location is the cell membrane. Its function is as follows. Acts as a GTPase-activating protein (GAP) for tubulin in concert with tubulin-specific chaperone C, but does not enhance tubulin heterodimerization. Acts as a GTPase-activating protein. May act as guanine nucleotide dissociation inhibitor towards ADP-ribosylation factor-like proteins. This Gallus gallus (Chicken) protein is Protein XRP2 (RP2).